A 332-amino-acid polypeptide reads, in one-letter code: Ferredoxin--NADP reductase 2 (332 aa).

FAD contacts are provided by Glu-37, Gln-45, Tyr-50, Val-90, Phe-124, Asp-285, and Thr-326.

The protein belongs to the ferredoxin--NADP reductase type 2 family. In terms of assembly, homodimer. The cofactor is FAD.

It catalyses the reaction 2 reduced [2Fe-2S]-[ferredoxin] + NADP(+) + H(+) = 2 oxidized [2Fe-2S]-[ferredoxin] + NADPH. The sequence is that of Ferredoxin--NADP reductase 2 from Bacillus licheniformis (strain ATCC 14580 / DSM 13 / JCM 2505 / CCUG 7422 / NBRC 12200 / NCIMB 9375 / NCTC 10341 / NRRL NRS-1264 / Gibson 46).